A 1097-amino-acid chain; its full sequence is RecBCD enzyme subunit RecC (1097 aa).

It belongs to the RecC family. In terms of assembly, heterotrimer of RecB, RecC and RecD. All subunits contribute to DNA-binding.

Its function is as follows. A helicase/nuclease that prepares dsDNA breaks (DSB) for recombinational DNA repair. Binds to DSBs and unwinds DNA via a highly rapid and processive ATP-dependent bidirectional helicase activity. Holoenzyme degrades any linearized DNA that is unable to undergo homologous recombination. In the holoenzyme this subunit recognizes the wild-type Chi sequence, and when added to isolated RecB increases its ATP-dependent helicase processivity. Unlike the case in E.coli, suppresses RecA-dependent homologous recombination, is instead required for single-strand annealing pathway repair of DSB. This is RecBCD enzyme subunit RecC from Mycobacterium tuberculosis (strain CDC 1551 / Oshkosh).